Consider the following 870-residue polypeptide: Lysosomal cholesterol signaling protein (870 aa).

Over 1–38 (MNSNLPAENLTIAVNMTKTLPTAVTHGFNSTNDPPSMS) the chain is Lumenal. The PIN-like transporter stretch occupies residues 1 to 370 (MNSNLPAENL…SAWLLTFPTM (370 aa)). Residues Asn9, Asn15, and Asn29 are each glycosylated (N-linked (GlcNAc...) asparagine). The chain crosses the membrane as a helical span at residues 39 to 59 (ITRLFPALLECFGIVLCGYIA). The cholesterol site is built by Phe43 and Tyr57. The Cytoplasmic segment spans residues 60–79 (GRANVITSTQAKGLGNFVSR). A helical membrane pass occupies residues 80–100 (FALPALLFKNMVVLNFSNVDW). The Lumenal portion of the chain corresponds to 101-104 (SFLY). Residues 105–125 (SILIAKASVFFIVCVLTLLVA) form a helical membrane-spanning segment. Residues 126 to 133 (SPDSRFSK) are Cytoplasmic-facing. Residues 134–154 (AGLFPIFATQSNDFALGYPIV) traverse the membrane as a discontinuously helical segment. Residues 155–167 (EALYQTTYPEYLQ) lie on the Lumenal side of the membrane. A helical membrane pass occupies residues 168 to 188 (YIYLVAPISLMMLNPIGFIFC). At 189–213 (EIQKWKDTQNASQNKIKIVGLGLLR) the chain is on the cytoplasmic side. A discontinuously helical membrane pass occupies residues 214–234 (VLQNPIVFMVFIGIAFNFILD). Topologically, residues 235–243 (RKVPVYVEN) are lumenal. Residues 244–264 (FLDGLGNSFSGSALFYLGLTM) traverse the membrane as a discontinuously helical segment. Topologically, residues 265-273 (VGKIKRLKK) are cytoplasmic. Cholesterol-binding residues include Gly266, Lys267, and Ile268. The chain crosses the membrane as a helical span at residues 274-294 (SAFVVLILLITAKLLVLPLLC). Residues 295 to 315 (REMVELLDKGDSVVNHTSLSN) lie on the Lumenal side of the membrane. The N-linked (GlcNAc...) asparagine glycan is linked to Asn309. A discontinuously helical membrane pass occupies residues 316 to 336 (YAFLYGVFPVAPGVAIFATQF). The Cytoplasmic portion of the chain corresponds to 337–346 (NMEVEIITSG). The chain crosses the membrane as a helical span at residues 347 to 367 (MVISTFVSAPIMYVSAWLLTF). The Lumenal segment spans residues 368-381 (PTMDPKPLAYAIQN). The GPCR stretch occupies residues 380 to 717 (QNVSFDISIV…FGIFGLDKHL (338 aa)). N-linked (GlcNAc...) asparagine glycosylation is present at Asn381. The helical transmembrane segment at 382–402 (VSFDISIVSLISLIWSLAILL) threads the bilayer. The Cytoplasmic segment spans residues 403 to 414 (LSKKYKQLPHML). The chain crosses the membrane as a helical span at residues 415-435 (TTNLLIAQSIVCAGMMIWNFV). Residues 436–438 (KEK) lie on the Lumenal side of the membrane. A helical transmembrane segment spans residues 439–459 (NFVGQILVFVLLYSSLYSTYL). Topologically, residues 460-480 (WTGLLAISLFLLKKRERVQIP) are cytoplasmic. The chain crosses the membrane as a helical span at residues 481–501 (VGIIIISGWGIPALLVGVLLI). The Lumenal segment spans residues 502 to 520 (TGKHNGDSIDSAFFYGKEQ). A helical membrane pass occupies residues 521 to 541 (MITTAVTLFCSILIAGISLMC). Over 542-660 (MNQTAQAGSY…GDQQLTRHVL (119 aa)) the chain is Cytoplasmic. Arg657 lines the cholesterol pocket. Residues 661–681 (LCLLLIIGLFANLSSCLWWLF) traverse the membrane as a helical segment. Topologically, residues 682–691 (NQEPGRLYVE) are lumenal. A helical transmembrane segment spans residues 692–712 (LQFFCAVFNFGQGFISFGIFG). At 713 to 870 (LDKHLIILPF…SSPPSHSPKT (158 aa)) the chain is on the cytoplasmic side. Residues 757-835 (YHRDLCIRNI…DEYLFYRFLQ (79 aa)) enclose the DEP domain.

In terms of assembly, homodimer; via the transporter region and DEP domain. Interacts with the GATOR1 complex and prevents interaction between GATOR1 and KICSTOR; this interaction is disrupted upon cholesterol starvation.

It localises to the lysosome membrane. In terms of biological role, cholesterol-binding protein that acts as a regulator of mTORC1 signaling pathway. Acts as a sensor of cholesterol to signal cholesterol sufficiency to mTORC1: in presence of cholesterol, binds cholesterol, leading to disruption of the interaction between the GATOR1 and KICSTOR complexes and promotion of mTORC1 signaling. Upon cholesterol starvation, GPR155/LYCHOS is unable to perturb the association between GATOR1 and KICSTOR, leading to mTORC1 signaling inhibition. Binds indole-3-acetic acid and may play a role in tryptophan metabolism. In Homo sapiens (Human), this protein is Lysosomal cholesterol signaling protein.